A 732-amino-acid polypeptide reads, in one-letter code: MAPPHQFQSKPSDVIRRRLSSAVSSKRPNIPGYTSLTPMWAGIAGAVVNNNTQFEVAISIHDSVYNTDFASSVVPYSPNEPEAQAGIIEKHVLETLRKFSTEHMCKFLGAGVTVILLREAPNLCTRLWLDMDIVPIVFNIKPFHTDSITRPNVRHRISSTTGSYVPSGAETPTVYYDPAQLQDPNKLSANVQTRLPIPRTVDEQADSAARKCIMYFGPGNNPRLQIGPRNQVAVDAGGKIHLIDDIDEYRKTVGKGTWNSVIKLADELREKKIKIGFFSSTPQGGGVALMRHAIIRFFTALDVDAAWYVPNPSPSVFRTTKNNHNILQGVADPSLRLTKEAADNFDSWILKNGLRWTAEGGPLAPGGVDIAFIDDPQMPGLIPLIKRIRPDLPIIYRSHIEIRSDLVHVKGSPQEEVWNYLWNNIQHSDLFISHPVNKFVPSDVPLEKLALLGAATDWLDGLSKHLDAWDSQYYMGEFRNLCVKEKMNELGWPAREYIVQIARFDPSKGIPNVIDSYARFRKLCVDKVMEDDIPQLLLCGHGAVDDPDASIIYDQVLQLIHAKYKEYAPDIVVMRCPPSDQLLNTLMANAKFALQLSTREGFEVKVSEALHAGKPVIACRTGGIPLQIEHGKSGYLCEPGDNAAVAQHMLDLYTDEDLYDTMSEYARTHVSDEVGTVGNAAAWMYLAVMYVSRGVKLRPHGAWINDLMRTEMGEPYRPGEPRLPRGELHVQG.

The propeptide occupies 1–25; that stretch reads MAPPHQFQSKPSDVIRRRLSSAVSS.

This sequence belongs to the glycosyltransferase group 1 family. Glycosyltransferase 4 subfamily. Homodimer.

The catalysed reaction is alpha,alpha-trehalose + phosphate = alpha-D-glucose + alpha-D-glucose 1-phosphate. Activity abolished by 1 mM Cu(2+). 0.1 mM Cu(2+) reduces trehalose phosphorolysis to 76% and trehalose synthesis to 48% of maximum activity. 1 mM Zn(2+) abolishes trehalose synthesis, and reduces trehalose phosphorolysis to 40% of maximum activity. Unaffected by EDTA. In terms of biological role, reversibly catalyzes the synthesis and degradation of trehalose from glucose and alpha-D-glucose 1-phosphate. The equilibrium lies in the direction of trehalose synthesis. The sequence is that of Trehalose phosphorylase from Grifola frondosa (Maitake).